We begin with the raw amino-acid sequence, 1755 residues long: Transposon Ty1-OR Gag-Pol polyprotein (1755 aa).

Polar residues-rich tracts occupy residues 1–10 (MESQQLSNYP), 48–60 (TKANSQQTTTPAS), and 127–152 (QSQFPQYPSSVGTPLSTPSPESGNTF). 3 disordered regions span residues 1–93 (MESQ…MMTQ), 126–173 (PQSQ…RPPP), and 352–421 (GSRN…SKST). Low complexity predominate over residues 153–165 (TDSSSADSDMTST). The tract at residues 299–401 (NNGIHINNKV…NSKSKTARAH (103 aa)) is RNA-binding. Positions 402 to 418 (NVSTSNNSPSTDNDSIS) are enriched in low complexity. Serine 416 is subject to Phosphoserine. Catalysis depends on aspartate 461, which acts as the For protease activity; shared with dimeric partner. Positions 583–640 (NVHTSESTRKYPYPFIHRMLAHANAQTIRYSLKNNTITYFNESDVDWSSAIDYQCPDC) are integrase-type zinc finger-like. An Integrase catalytic domain is found at 660 to 835 (NSYEPFQYLH…AGLDISTLLP (176 aa)). Aspartate 671 and aspartate 736 together coordinate Mg(2+). 3 disordered regions span residues 956–1087 (SKAV…ETEK), 1092–1111 (RSPSIDASPPENNSSHNIVP), and 1130–1187 (DLPL…DNET). The segment covering 960–969 (SPTDSTPPST) has biased composition (low complexity). The segment covering 1005 to 1015 (STPQISNIEST) has biased composition (polar residues). Residues 1038 to 1053 (ESSHASKSKDFRHSDS) are compositionally biased toward basic and acidic residues. 2 stretches are compositionally biased toward polar residues: residues 1054–1082 (YSENETNHTNVPISSTGGTNNKTVPQISD) and 1101–1111 (PENNSSHNIVP). A Bipartite nuclear localization signal motif is present at residues 1178 to 1212 (KKRSLEDNETEIKVSRDTWNTKNMRSLEPPRSKKR). In terms of domain architecture, Reverse transcriptase Ty1/copia-type spans 1338–1476 (NNYYITQLDI…DILGLEIKYQ (139 aa)). Residues aspartate 1346, aspartate 1427, aspartate 1428, aspartate 1610, glutamate 1652, and aspartate 1685 each coordinate Mg(2+). The RNase H Ty1/copia-type domain occupies 1610 to 1752 (DASYGNQPYY…IKTFKLLTNK (143 aa)).

The capsid protein forms a homotrimer, from which the VLPs are assembled. The protease is a homodimer, whose active site consists of two apposed aspartic acid residues. In terms of processing, initially, virus-like particles (VLPs) are composed of the structural unprocessed proteins Gag and Gag-Pol, and also contain the host initiator methionine tRNA (tRNA(i)-Met) which serves as a primer for minus-strand DNA synthesis, and a dimer of genomic Ty RNA. Processing of the polyproteins occurs within the particle and proceeds by an ordered pathway, called maturation. First, the protease (PR) is released by autocatalytic cleavage of the Gag-Pol polyprotein yielding capsid protein p45 and a Pol-p154 precursor protein. This cleavage is a prerequisite for subsequent processing of Pol-p154 at the remaining sites to release the mature structural and catalytic proteins. Maturation takes place prior to the RT reaction and is required to produce transposition-competent VLPs.

It is found in the cytoplasm. The protein localises to the nucleus. The enzyme catalyses DNA(n) + a 2'-deoxyribonucleoside 5'-triphosphate = DNA(n+1) + diphosphate. It carries out the reaction Endonucleolytic cleavage to 5'-phosphomonoester.. Its function is as follows. Capsid protein (CA) is the structural component of the virus-like particle (VLP), forming the shell that encapsulates the retrotransposons dimeric RNA genome. The particles are assembled from trimer-clustered units and there are holes in the capsid shells that allow for the diffusion of macromolecules. CA also has nucleocapsid-like chaperone activity, promoting primer tRNA(i)-Met annealing to the multipartite primer-binding site (PBS), dimerization of Ty1 RNA and initiation of reverse transcription. The aspartyl protease (PR) mediates the proteolytic cleavages of the Gag and Gag-Pol polyproteins after assembly of the VLP. Functionally, reverse transcriptase/ribonuclease H (RT) is a multifunctional enzyme that catalyzes the conversion of the retro-elements RNA genome into dsDNA within the VLP. The enzyme displays a DNA polymerase activity that can copy either DNA or RNA templates, and a ribonuclease H (RNase H) activity that cleaves the RNA strand of RNA-DNA heteroduplexes during plus-strand synthesis and hydrolyzes RNA primers. The conversion leads to a linear dsDNA copy of the retrotransposon that includes long terminal repeats (LTRs) at both ends. In terms of biological role, integrase (IN) targets the VLP to the nucleus, where a subparticle preintegration complex (PIC) containing at least integrase and the newly synthesized dsDNA copy of the retrotransposon must transit the nuclear membrane. Once in the nucleus, integrase performs the integration of the dsDNA into the host genome. The polypeptide is Transposon Ty1-OR Gag-Pol polyprotein (TY1B-OR) (Saccharomyces cerevisiae (strain ATCC 204508 / S288c) (Baker's yeast)).